The primary structure comprises 274 residues: Large ribosomal subunit protein uL2 (274 aa).

Residues 1 to 23 (MAIKIYRPTSPGRRHHSVSSFEE) form a disordered region.

Belongs to the universal ribosomal protein uL2 family. As to quaternary structure, part of the 50S ribosomal subunit. Forms a bridge to the 30S subunit in the 70S ribosome.

Functionally, one of the primary rRNA binding proteins. Required for association of the 30S and 50S subunits to form the 70S ribosome, for tRNA binding and peptide bond formation. It has been suggested to have peptidyltransferase activity; this is somewhat controversial. Makes several contacts with the 16S rRNA in the 70S ribosome. The polypeptide is Large ribosomal subunit protein uL2 (Dehalococcoides mccartyi (strain ATCC BAA-2100 / JCM 16839 / KCTC 5957 / BAV1)).